A 388-amino-acid polypeptide reads, in one-letter code: Probable nitrate transporter NarT (388 aa).

A run of 12 helical transmembrane segments spans residues 14-34, 45-65, 69-89, 98-118, 139-159, 161-181, 206-226, 242-262, 276-296, 297-317, 330-350, and 359-379; these read TLSL…MPMI, ISIV…PFGY, IIGA…PIFL, MLML…VGVT, GNLG…AIGW, STVR…FFLG, YYLS…GIFL, GIRA…GGII, FLFM…ILFT, VGCL…FKLV, GIVS…ITYV, and LAFI…WHLS.

The protein belongs to the major facilitator superfamily. Nitrate/nitrite porter (TC 2.A.1.8) family.

The protein resides in the cell membrane. Probably required for nitrate uptake under anoxic conditions. Also possibly involved in excretion of nitrite produced by the dissimilatory reduction of nitrate. The protein is Probable nitrate transporter NarT (narT) of Staphylococcus carnosus (strain TM300).